The sequence spans 700 residues: Tectonic-2 (700 aa).

The N-terminal stretch at Met-1–Gly-25 is a signal peptide. Residues Asp-26–Cys-665 lie on the Extracellular side of the membrane. Residues Asn-76, Asn-82, Asn-146, Asn-156, and Asn-389 are each glycosylated (N-linked (GlcNAc...) asparagine). Residues Val-666–Leu-682 traverse the membrane as a helical segment. Over Arg-683–His-700 the chain is Cytoplasmic.

This sequence belongs to the tectonic family. As to quaternary structure, part of the tectonic-like complex (also named B9 complex). As to expression, significant expression is observed in brain, kidney and eye.

The protein localises to the membrane. It is found in the cytoplasm. The protein resides in the cytoskeleton. Its subcellular location is the cilium basal body. Component of the tectonic-like complex, a complex localized at the transition zone of primary cilia and acting as a barrier that prevents diffusion of transmembrane proteins between the cilia and plasma membranes. Required for hedgehog signaling transduction. The chain is Tectonic-2 (Tctn2) from Mus musculus (Mouse).